The sequence spans 406 residues: Transcriptional activator NprA (406 aa).

TPR repeat units follow at residues 125-158 (YYYYKFLGLLYYCKEKYEDALEYYKKAEQRFRSQ), 206-239 (AECHILLGICYRRYGEVDQAIECYSLAHKIAQII), 246-279 (GTIEHNLGYLMSMKHEHYEAIQHYKKSLLYKRNS), and 285-318 (FITLFSLIKEYYVSKNYKKALANVEESLQLLKRE).

In terms of biological role, activates the transcription of nprS by about five fold. May bind to the upstream region of nprS promoter. The sequence is that of Transcriptional activator NprA (nprA) from Geobacillus stearothermophilus (Bacillus stearothermophilus).